A 419-amino-acid polypeptide reads, in one-letter code: D-amino acid dehydrogenase (419 aa).

3-17 (VLILGSGVVGVTSAY) provides a ligand contact to FAD.

It belongs to the DadA oxidoreductase family. Requires FAD as cofactor.

It catalyses the reaction a D-alpha-amino acid + A + H2O = a 2-oxocarboxylate + AH2 + NH4(+). It participates in amino-acid degradation; D-alanine degradation; NH(3) and pyruvate from D-alanine: step 1/1. Its function is as follows. Oxidative deamination of D-amino acids. The sequence is that of D-amino acid dehydrogenase from Chromohalobacter salexigens (strain ATCC BAA-138 / DSM 3043 / CIP 106854 / NCIMB 13768 / 1H11).